Here is a 566-residue protein sequence, read N- to C-terminus: Repressible alkaline phosphatase (566 aa).

Residues 1-11 (MMTHTLPSEQT) show a composition bias toward polar residues. The tract at residues 1–27 (MMTHTLPSEQTRLVPGSDSSSRPKKRR) is disordered. Residues 1-33 (MMTHTLPSEQTRLVPGSDSSSRPKKRRISKRSK) are Cytoplasmic-facing. The helical transmembrane segment at 34-59 (IIVSTVVCIGLLLVLVQLAFPSSFAL) threads the bilayer. D75 contacts Mg(2+). D75 serves as a coordination point for Zn(2+). The active-site Phosphoserine intermediate is the S123. Position 123 is a phosphoserine (S123). The Mg(2+) site is built by D174 and T176. N268 carries N-linked (GlcNAc...) asparagine glycosylation. E325 contributes to the Mg(2+) binding site. 4 residues coordinate Zn(2+): D330, H334, D373, and H374. N401 is a glycosylation site (N-linked (GlcNAc...) asparagine). H484 lines the Zn(2+) pocket.

Belongs to the alkaline phosphatase family. The cofactor is Mg(2+). Zn(2+) is required as a cofactor.

The protein localises to the vacuole membrane. Its subcellular location is the cytoplasm. It carries out the reaction a phosphate monoester + H2O = an alcohol + phosphate. The catalysed reaction is (2E,6E)-farnesyl diphosphate + H2O = (2E,6E)-farnesol + diphosphate. It catalyses the reaction beta-D-fructose 2,6-bisphosphate + H2O = beta-D-fructose 2-phosphate + phosphate. Phosphatase with broad substrate specificity. A truncated (soluble) version of the protein is responsible for the production of (E,E)-farnesol from (E,E)-farnesyl diphosphate. Acts as a fructose-2,6-bisphosphate 6-phosphatase. This Saccharomyces cerevisiae (strain ATCC 204508 / S288c) (Baker's yeast) protein is Repressible alkaline phosphatase (PHO8).